We begin with the raw amino-acid sequence, 278 residues long: Large ribosomal subunit protein uL2 (278 aa).

Disordered regions lie at residues 29 to 53 (PEKSLVRPLSKTGGRNSSGRITTRH) and 223 to 278 (GVAM…GKKR). Positions 255–268 (GRTRRPGKESDKLI) are enriched in basic and acidic residues. Positions 269 to 278 (VRRRRTGKKR) are enriched in basic residues.

It belongs to the universal ribosomal protein uL2 family. As to quaternary structure, part of the 50S ribosomal subunit. Forms a bridge to the 30S subunit in the 70S ribosome.

In terms of biological role, one of the primary rRNA binding proteins. Required for association of the 30S and 50S subunits to form the 70S ribosome, for tRNA binding and peptide bond formation. It has been suggested to have peptidyltransferase activity; this is somewhat controversial. Makes several contacts with the 16S rRNA in the 70S ribosome. This chain is Large ribosomal subunit protein uL2, found in Kineococcus radiotolerans (strain ATCC BAA-149 / DSM 14245 / SRS30216).